The following is a 462-amino-acid chain: Jasmonoyl--L-amino acid synthetase GH3.3 (462 aa).

Serine 103 lines the ATP pocket. Serine 106 contacts jasmonate. ATP-binding positions include threonine 126, asparagine 172, and glycine 337–tryptophan 342. An L-alpha-amino acid is bound at residue threonine 170 to tyrosine 174. Jasmonate-binding positions include alanine 334–glycine 337 and serine 339.

It belongs to the IAA-amido conjugating enzyme family. In terms of tissue distribution, expressed in green shoots and flowers.

The enzyme catalyses a jasmonate + an L-alpha-amino acid + ATP = a jasmonyl-L-amino acid + AMP + diphosphate + H(+). Functionally, catalyzes the synthesis of jasmonate-amino acid conjugates by adenylation. Catalyzes the conjugation of jasmonate (JA) to Ile when expressed in a heterologous system (E.coli). Catalyzes in vitro the conjugation of jasmonate (JA) to Ile, Phe, Leu, Met, Val and Trp. May catalyze the synthesis of indole-3-acetic acid (IAA)-amino acid conjugates, providing a mechanism for the plant to cope with the presence of excess auxin. This is Jasmonoyl--L-amino acid synthetase GH3.3 from Oryza sativa subsp. japonica (Rice).